Here is a 255-residue protein sequence, read N- to C-terminus: tRNA pseudouridine synthase A (255 aa).

Asp52 acts as the Nucleophile in catalysis. Residue Tyr111 participates in substrate binding.

The protein belongs to the tRNA pseudouridine synthase TruA family. In terms of assembly, homodimer.

The enzyme catalyses uridine(38/39/40) in tRNA = pseudouridine(38/39/40) in tRNA. Its function is as follows. Formation of pseudouridine at positions 38, 39 and 40 in the anticodon stem and loop of transfer RNAs. This Cereibacter sphaeroides (strain KD131 / KCTC 12085) (Rhodobacter sphaeroides) protein is tRNA pseudouridine synthase A.